We begin with the raw amino-acid sequence, 1210 residues long: V-type proton ATPase 116 kDa subunit a 4 (1210 aa).

At M1–F715 the chain is on the cytoplasmic side. The segment covering S259–P271 has biased composition (low complexity). Positions S259–M292 are disordered. The span at P275–S291 shows a compositional bias: basic and acidic residues. The stretch at F339 to N405 forms a coiled coil. The helical transmembrane segment at A716 to I736 threads the bilayer. At R737 to Y760 the chain is on the extracellular side. A helical membrane pass occupies residues I761–A781. Topologically, residues K782 to A855 are cytoplasmic. A helical membrane pass occupies residues S856–I876. Topologically, residues H877–V892 are extracellular. The helical transmembrane segment at I893–F913 threads the bilayer. Over S914–T976 the chain is Cytoplasmic. A helical membrane pass occupies residues I977–V997. Over R998 to P1127 the chain is Extracellular. N-linked (GlcNAc...) asparagine glycans are attached at residues N1010, N1019, and N1118. A helical membrane pass occupies residues V1128–M1148. The Cytoplasmic segment spans residues E1149–I1210.

This sequence belongs to the V-ATPase 116 kDa subunit family. As to quaternary structure, V-ATPase is a heteromultimeric enzyme made up of two complexes: the ATP-hydrolytic V1 complex and the proton translocation V0 complex. The V1 complex consists of three catalytic AB heterodimers that form a heterohexamer, three peripheral stalks each consisting of EG heterodimers, one central rotor including subunits D and F, and the regulatory subunits C and H. The proton translocation complex V0 consists of the proton transport subunit a, a ring of proteolipid subunits c9c'', rotary subunit d, subunits e and f, and the accessory subunits vah-19/Ac45 and vah-20/PRR. As to expression, expressed in uterus.

The protein localises to the membrane. Functionally, subunit of the V0 complex of vacuolar(H+)-ATPase (V-ATPase), a multisubunit enzyme composed of a peripheral complex (V1) that hydrolyzes ATP and a membrane integral complex (V0) that translocates protons. V-ATPase is responsible for acidifying and maintaining the pH of intracellular compartments and in some cell types, is targeted to the plasma membrane, where it is responsible for acidifying the extracellular environment. In Caenorhabditis elegans, this protein is V-type proton ATPase 116 kDa subunit a 4.